The primary structure comprises 182 residues: Isopentenyl-diphosphate Delta-isomerase (182 aa).

The Mn(2+) site is built by His-25 and His-32. The Nudix hydrolase domain maps to 30 to 164 (LLHLAFSSWL…PWAFSPWMVM (135 aa)). Cys-67 is an active-site residue. His-69 contacts Mn(2+). Position 87 (Glu-87) interacts with Mg(2+). The Mn(2+) site is built by Glu-114 and Glu-116. Glu-116 is a catalytic residue.

The protein belongs to the IPP isomerase type 1 family. Homodimer. Mg(2+) serves as cofactor. It depends on Mn(2+) as a cofactor.

It localises to the cytoplasm. It carries out the reaction isopentenyl diphosphate = dimethylallyl diphosphate. Its pathway is isoprenoid biosynthesis; dimethylallyl diphosphate biosynthesis; dimethylallyl diphosphate from isopentenyl diphosphate: step 1/1. In terms of biological role, catalyzes the 1,3-allylic rearrangement of the homoallylic substrate isopentenyl (IPP) to its highly electrophilic allylic isomer, dimethylallyl diphosphate (DMAPP). The sequence is that of Isopentenyl-diphosphate Delta-isomerase from Shigella flexneri serotype 5b (strain 8401).